The chain runs to 99 residues: Aspartyl/glutamyl-tRNA(Asn/Gln) amidotransferase subunit C (99 aa).

Belongs to the GatC family. As to quaternary structure, heterotrimer of A, B and C subunits.

The catalysed reaction is L-glutamyl-tRNA(Gln) + L-glutamine + ATP + H2O = L-glutaminyl-tRNA(Gln) + L-glutamate + ADP + phosphate + H(+). The enzyme catalyses L-aspartyl-tRNA(Asn) + L-glutamine + ATP + H2O = L-asparaginyl-tRNA(Asn) + L-glutamate + ADP + phosphate + 2 H(+). Allows the formation of correctly charged Asn-tRNA(Asn) or Gln-tRNA(Gln) through the transamidation of misacylated Asp-tRNA(Asn) or Glu-tRNA(Gln) in organisms which lack either or both of asparaginyl-tRNA or glutaminyl-tRNA synthetases. The reaction takes place in the presence of glutamine and ATP through an activated phospho-Asp-tRNA(Asn) or phospho-Glu-tRNA(Gln). This chain is Aspartyl/glutamyl-tRNA(Asn/Gln) amidotransferase subunit C, found in Cupriavidus metallidurans (strain ATCC 43123 / DSM 2839 / NBRC 102507 / CH34) (Ralstonia metallidurans).